Reading from the N-terminus, the 138-residue chain is MATTILAFDFGTYSIGCAVGQSITKTAQSLTAFKSQDGIPNWQHIEKIIKEWQPDLLVVGLPLNMDGSEQPLTQRARKFANRLNGRFNLPVALQDERLTTTEAKSEIFSRGGYKALKKDKIDTISACLILESWFDNNP.

The protein belongs to the YqgF nuclease family.

It is found in the cytoplasm. Functionally, could be a nuclease involved in processing of the 5'-end of pre-16S rRNA. The polypeptide is Putative pre-16S rRNA nuclease (Haemophilus ducreyi (strain 35000HP / ATCC 700724)).